Consider the following 346-residue polypeptide: D-alanine--D-alanine ligase (346 aa).

Residues 134–340 form the ATP-grasp domain; it reads KFLAESLGVK…IDYTYIHSIQ (207 aa). Residue 161–212 participates in ATP binding; that stretch reads EYPVIIKPVRLGSSIGVSIVKSEAELDYALDVAFEFDNDVIVEPFIDGVKEF. Mg(2+) contacts are provided by D284, E296, and N298.

It belongs to the D-alanine--D-alanine ligase family. It depends on Mg(2+) as a cofactor. Mn(2+) serves as cofactor.

It is found in the cytoplasm. The enzyme catalyses 2 D-alanine + ATP = D-alanyl-D-alanine + ADP + phosphate + H(+). It participates in cell wall biogenesis; peptidoglycan biosynthesis. Its function is as follows. Cell wall formation. In Sulfurovum sp. (strain NBC37-1), this protein is D-alanine--D-alanine ligase.